The chain runs to 546 residues: MAAKDVKFGRSAREKMLRGVDILADAVKVTLGPKGRNVVIDKSFGAPRITKDGVSVAKEIELEDKFENMGAQMLREVASKTNDTAGDGTTTATVLGQAIVQEGAKAVAAGMNPMDLKRGIDLAVTEVVAELLGKAKKINTSEEVAQVGTISANGEAEIGKMIADAMQKVGNEGVITVEEAKTAETELEVVEGMQFDRGYLSPYFVTNPEKMVADLEDAYILLHEKKLSNLQALLPVLEAVVQTSKPLVIIAEDVEGEALATLVVNKLRGGLKIAAVKAPGFGDRRKAMLEDIAILTGGQVISEDLGIKLETVTLDMLGRAKKVSISKENTTIVDGAGQKAEIDARVSQIKQQIEETSSDYDREKLQERLAKLAGGVAVIRVGGATEVEVKEKKDRVDDALNATRAAVEEGIVAGGGTALLRASAKISAKGINADQEAGINIVRRALQAPARQITTNAGEEASVIVGKILENASETYGYNTANGEFGDLIKAGVVDPVKVVRTALQNAASVAGLLITTEAMIAELPKKDAAPAGMPGGMGGMGGMDF.

Residues 30–33, Lys51, 87–91, Gly415, and Asp495 each bind ATP; these read TLGP and DGTTT.

Belongs to the chaperonin (HSP60) family. Forms a cylinder of 14 subunits composed of two heptameric rings stacked back-to-back. Interacts with the co-chaperonin GroES.

The protein resides in the cytoplasm. It carries out the reaction ATP + H2O + a folded polypeptide = ADP + phosphate + an unfolded polypeptide.. Together with its co-chaperonin GroES, plays an essential role in assisting protein folding. The GroEL-GroES system forms a nano-cage that allows encapsulation of the non-native substrate proteins and provides a physical environment optimized to promote and accelerate protein folding. This chain is Chaperonin GroEL, found in Brucella anthropi (strain ATCC 49188 / DSM 6882 / CCUG 24695 / JCM 21032 / LMG 3331 / NBRC 15819 / NCTC 12168 / Alc 37) (Ochrobactrum anthropi).